The primary structure comprises 414 residues: Succinylornithine transaminase (414 aa).

Lysine 260 bears the N6-(pyridoxal phosphate)lysine mark.

This sequence belongs to the class-III pyridoxal-phosphate-dependent aminotransferase family. AstC subfamily. It depends on pyridoxal 5'-phosphate as a cofactor.

It catalyses the reaction N(2)-succinyl-L-ornithine + 2-oxoglutarate = N-succinyl-L-glutamate 5-semialdehyde + L-glutamate. Its pathway is amino-acid degradation; L-arginine degradation via AST pathway; L-glutamate and succinate from L-arginine: step 3/5. Catalyzes the transamination of N(2)-succinylornithine and alpha-ketoglutarate into N(2)-succinylglutamate semialdehyde and glutamate. Can also act as an acetylornithine aminotransferase. The chain is Succinylornithine transaminase from Yersinia pseudotuberculosis serotype I (strain IP32953).